The following is a 343-amino-acid chain: tRNA N6-adenosine threonylcarbamoyltransferase (343 aa).

Fe cation-binding residues include H111 and H115. Residues 135 to 139 (VLSGG), D168, G181, and N280 each bind substrate. D306 contributes to the Fe cation binding site.

The protein belongs to the KAE1 / TsaD family. It depends on Fe(2+) as a cofactor.

Its subcellular location is the cytoplasm. The catalysed reaction is L-threonylcarbamoyladenylate + adenosine(37) in tRNA = N(6)-L-threonylcarbamoyladenosine(37) in tRNA + AMP + H(+). In terms of biological role, required for the formation of a threonylcarbamoyl group on adenosine at position 37 (t(6)A37) in tRNAs that read codons beginning with adenine. Is involved in the transfer of the threonylcarbamoyl moiety of threonylcarbamoyl-AMP (TC-AMP) to the N6 group of A37, together with TsaE and TsaB. TsaD likely plays a direct catalytic role in this reaction. This chain is tRNA N6-adenosine threonylcarbamoyltransferase, found in Protochlamydia amoebophila (strain UWE25).